A 203-amino-acid chain; its full sequence is Small ribosomal subunit protein uS4c (203 aa).

Positions 91 to 159 (MRLDNIIFRL…ISKNIEFYQK (69 aa)) constitute an S4 RNA-binding domain.

This sequence belongs to the universal ribosomal protein uS4 family. In terms of assembly, part of the 30S ribosomal subunit. Contacts protein S5. The interaction surface between S4 and S5 is involved in control of translational fidelity.

Its subcellular location is the plastid. It localises to the chloroplast. Functionally, one of the primary rRNA binding proteins, it binds directly to 16S rRNA where it nucleates assembly of the body of the 30S subunit. With S5 and S12 plays an important role in translational accuracy. This chain is Small ribosomal subunit protein uS4c (rps4), found in Lopidium concinnum (Moss).